We begin with the raw amino-acid sequence, 358 residues long: Pyruvate dehydrogenase E1 component subunit alpha (358 aa).

Heterodimer of an alpha and a beta chain. Thiamine diphosphate is required as a cofactor.

The enzyme catalyses N(6)-[(R)-lipoyl]-L-lysyl-[protein] + pyruvate + H(+) = N(6)-[(R)-S(8)-acetyldihydrolipoyl]-L-lysyl-[protein] + CO2. The pyruvate dehydrogenase complex catalyzes the overall conversion of pyruvate to acetyl-CoA and CO(2). It contains multiple copies of three enzymatic components: pyruvate dehydrogenase (E1), dihydrolipoamide acetyltransferase (E2) and lipoamide dehydrogenase (E3). In Mycoplasma genitalium (strain ATCC 33530 / DSM 19775 / NCTC 10195 / G37) (Mycoplasmoides genitalium), this protein is Pyruvate dehydrogenase E1 component subunit alpha (pdhA).